The primary structure comprises 227 residues: YEATS domain-containing protein 4 (227 aa).

Residues 15–158 enclose the YEATS domain; that stretch reads RVKGVTIVKP…AMMQQLLTTS (144 aa). K37 is covalently cross-linked (Glycyl lysine isopeptide (Lys-Gly) (interchain with G-Cter in SUMO2)). Residues 93–97 are diacetylated histone H3 binding; the sequence is WGEFE. Residues 163 to 227 form an interaction with MLLT10 region; it reads LGAYKHETEF…LEEDDQAKDI (65 aa). Residues 168-227 are interaction with TACC1; that stretch reads HETEFAELEVKTREKLEAAKKKTSFEIAELKERLKASRETINCLKNEIRKLEEDDQAKDI. Residues 178 to 226 adopt a coiled-coil conformation; sequence KTREKLEAAKKKTSFEIAELKERLKASRETINCLKNEIRKLEEDDQAKD.

As to quaternary structure, component of numerous complexes with chromatin remodeling and histone acetyltransferase activity. Component of the NuA4 histone acetyltransferase complex which contains the catalytic subunit KAT5/TIP60 and the subunits EP400, TRRAP/PAF400, BRD8/SMAP, EPC1, DMAP1/DNMAP1, RUVBL1/TIP49, RUVBL2, ING3, actin, ACTL6A/BAF53A, MORF4L1/MRG15, MORF4L2/MRGX, MRGBP, YEATS4/GAS41, VPS72/YL1 and MEAF6. The NuA4 complex interacts with MYC and the adenovirus E1A protein. Component of a NuA4-related complex which contains EP400, TRRAP/PAF400, SRCAP, BRD8/SMAP, EPC1, DMAP1/DNMAP1, RUVBL1/TIP49, RUVBL2, actin, ACTL6A/BAF53A, VPS72 and YEATS4/GAS41. Interacts with MLLT10/AF10. Also interacts with the SWI/SNF component SMARCB1/BAF47, TACC1 and TACC2, and the nuclear matrix protein NUMA1. As to expression, expressed in brain, heart, kidney, liver, lung, pancreas, placenta and skeletal muscle.

The protein localises to the nucleus. Its function is as follows. Chromatin reader component of the NuA4 histone acetyltransferase (HAT) complex, a complex involved in transcriptional activation of select genes principally by acetylation of nucleosomal histones H4 and H2A. Specifically recognizes and binds acylated histone H3, with a preference for histone H3 diacetylated at 'Lys-18' and 'Lys-27' (H3K18ac and H3K27ac) or histone H3 diacetylated at 'Lys-14' and 'Lys-27' (H3K14ac and H3K27ac). Also able to recognize and bind crotonylated histone H3. May also recognize and bind histone H3 succinylated at 'Lys-122' (H3K122succ); additional evidences are however required to confirm this result in vivo. Plays a key role in histone variant H2AZ1/H2A.Z deposition into specific chromatin regions: recognizes and binds H3K14ac and H3K27ac on the promoters of actively transcribed genes and recruits NuA4-related complex to deposit H2AZ1/H2A.Z. H2AZ1/H2A.Z deposition is required for maintenance of embryonic stem cell. The protein is YEATS domain-containing protein 4 of Homo sapiens (Human).